Reading from the N-terminus, the 786-residue chain is Endonuclease MutS2 (786 aa).

335–342 serves as a coordination point for ATP; the sequence is GPNTGGKT. A Smr domain is found at 711-786; sequence LDLRGERFEN…GLGVTVVELK (76 aa).

This sequence belongs to the DNA mismatch repair MutS family. MutS2 subfamily. In terms of assembly, homodimer. Binds to stalled ribosomes, contacting rRNA.

Functionally, endonuclease that is involved in the suppression of homologous recombination and thus may have a key role in the control of bacterial genetic diversity. Its function is as follows. Acts as a ribosome collision sensor, splitting the ribosome into its 2 subunits. Detects stalled/collided 70S ribosomes which it binds and splits by an ATP-hydrolysis driven conformational change. Acts upstream of the ribosome quality control system (RQC), a ribosome-associated complex that mediates the extraction of incompletely synthesized nascent chains from stalled ribosomes and their subsequent degradation. Probably generates substrates for RQC. In Bacillus thuringiensis (strain Al Hakam), this protein is Endonuclease MutS2.